The chain runs to 177 residues: Large ribosomal subunit protein uL6 (177 aa).

This sequence belongs to the universal ribosomal protein uL6 family. As to quaternary structure, part of the 50S ribosomal subunit.

This protein binds to the 23S rRNA, and is important in its secondary structure. It is located near the subunit interface in the base of the L7/L12 stalk, and near the tRNA binding site of the peptidyltransferase center. The polypeptide is Large ribosomal subunit protein uL6 (Thioalkalivibrio sulfidiphilus (strain HL-EbGR7)).